The chain runs to 511 residues: ATP synthase subunit alpha (511 aa).

169–176 (GDRQTGKT) is an ATP binding site.

This sequence belongs to the ATPase alpha/beta chains family. As to quaternary structure, F-type ATPases have 2 components, CF(1) - the catalytic core - and CF(0) - the membrane proton channel. CF(1) has five subunits: alpha(3), beta(3), gamma(1), delta(1), epsilon(1). CF(0) has three main subunits: a(1), b(2) and c(9-12). The alpha and beta chains form an alternating ring which encloses part of the gamma chain. CF(1) is attached to CF(0) by a central stalk formed by the gamma and epsilon chains, while a peripheral stalk is formed by the delta and b chains.

It is found in the cell inner membrane. The catalysed reaction is ATP + H2O + 4 H(+)(in) = ADP + phosphate + 5 H(+)(out). In terms of biological role, produces ATP from ADP in the presence of a proton gradient across the membrane. The alpha chain is a regulatory subunit. This chain is ATP synthase subunit alpha, found in Paracoccus denitrificans (strain Pd 1222).